Reading from the N-terminus, the 439-residue chain is Ribosomal protein uS12 methylthiotransferase RimO (439 aa).

Residues 7 to 119 form the MTTase N-terminal domain; it reads KQLCLISLGC…IDIMIAKKQN (113 aa). [4Fe-4S] cluster is bound by residues Cys-16, Cys-50, Cys-82, Cys-151, Cys-155, and Cys-158. Residues 137 to 365 form the Radical SAM core domain; sequence TGSSVHAYVK…NKIALKHQNN (229 aa).

This sequence belongs to the methylthiotransferase family. RimO subfamily. Requires [4Fe-4S] cluster as cofactor.

The protein localises to the cytoplasm. It catalyses the reaction L-aspartate(89)-[ribosomal protein uS12]-hydrogen + (sulfur carrier)-SH + AH2 + 2 S-adenosyl-L-methionine = 3-methylsulfanyl-L-aspartate(89)-[ribosomal protein uS12]-hydrogen + (sulfur carrier)-H + 5'-deoxyadenosine + L-methionine + A + S-adenosyl-L-homocysteine + 2 H(+). Catalyzes the methylthiolation of an aspartic acid residue of ribosomal protein uS12. The polypeptide is Ribosomal protein uS12 methylthiotransferase RimO (Helicobacter pylori (strain Shi470)).